Consider the following 119-residue polypeptide: NLVQFSNMIQCANHGSRPSLAYADYGCYCSAGGSGTPVDELDRCCKTHDDCYARATKSYSCTPYWTLYSWQCIEKTPTCDSKTGCQRFVCDCDATAAKCFAKAPYNKENYNIDPKKRCQ.

Disulfide bonds link Cys11-Cys72, Cys27-Cys118, Cys29-Cys45, Cys44-Cys99, Cys51-Cys92, Cys61-Cys85, and Cys79-Cys90. Residues 107–117 form an important for membrane-damaging activities in eukaryotes and bacteria; heparin-binding region; sequence KENYNIDPKKR.

This sequence belongs to the phospholipase A2 family. Group I subfamily. D49 sub-subfamily. As to expression, expressed by the venom gland.

It localises to the secreted. In Notechis scutatus scutatus (Mainland tiger snake), this protein is Basic phospholipase A2 homolog 1.